A 133-amino-acid polypeptide reads, in one-letter code: Holo-[acyl-carrier-protein] synthase (133 aa).

Asp8 and Glu57 together coordinate Mg(2+).

Belongs to the P-Pant transferase superfamily. AcpS family. It depends on Mg(2+) as a cofactor.

The protein localises to the cytoplasm. It catalyses the reaction apo-[ACP] + CoA = holo-[ACP] + adenosine 3',5'-bisphosphate + H(+). Its function is as follows. Transfers the 4'-phosphopantetheine moiety from coenzyme A to a Ser of acyl-carrier-protein. This chain is Holo-[acyl-carrier-protein] synthase, found in Bartonella bacilliformis (strain ATCC 35685 / KC583 / Herrer 020/F12,63).